Here is a 250-residue protein sequence, read N- to C-terminus: Cell division protein ZapD (250 aa).

Belongs to the ZapD family. Interacts with FtsZ.

It is found in the cytoplasm. Cell division factor that enhances FtsZ-ring assembly. Directly interacts with FtsZ and promotes bundling of FtsZ protofilaments, with a reduction in FtsZ GTPase activity. The chain is Cell division protein ZapD from Pectobacterium atrosepticum (strain SCRI 1043 / ATCC BAA-672) (Erwinia carotovora subsp. atroseptica).